Here is a 206-residue protein sequence, read N- to C-terminus: MMMLFFTVAMVHIVALMSPGPDFFFVSQTAVSRSRKEAMMGVLGITCGVMVWAGVALLGLHLIIEKMAWLHTIIMVGGGLYLCWMGYQMLRGALKKQDAAASSPHIELAQSGRSFLKGLLTNLSNPKAIIYFGSVFSLFVGDNVGAAARWGIFALITLETLAWFTVVASLFALPKMRRGYQRLAKWIDGFAGALFAGFGIHLIISR.

Residues Met1–Pro21 form a helical membrane-spanning segment. Residues Asp22–Leu43 are Periplasmic-facing. Residues Gly44 to Ile64 form a helical membrane-spanning segment. Residues Glu65–Lys66 are Cytoplasmic-facing. The helical transmembrane segment at Met67–Tyr87 threads the bilayer. The Periplasmic portion of the chain corresponds to Gln88–Arg149. A helical membrane pass occupies residues Trp150–Leu173. Over Pro174 to Arg206 the chain is Cytoplasmic.

The protein belongs to the Rht family.

It localises to the cell inner membrane. Its function is as follows. Conducts the efflux of threonine. This is Threonine efflux protein (rhtC) from Salmonella typhimurium (strain LT2 / SGSC1412 / ATCC 700720).